Reading from the N-terminus, the 548-residue chain is MDPAWDGSQGSRPGTASIRVRELSWQGLNNPQPQNKRLGSHGDIYRERRVEEHLSPARLQALAQVDDLQLVRVLEMCVDTRKNSLGNFGMHLPNLIQLKLNHSCLGSLRDLGTSLGQLQVLWLARCGLTDLDGIGSFLALKELYVSYNNISDLSPLCLLEQLEVLDLEGNNVEDLGQMRYLQLCPRLTTLTLEGNLVCLKPDPGPSNKAPQDYNYRAEVKKLIPQLHILDEVPTTCTNLPAPQKLSQDWLMVKEAIKEGNVLDILLPRLECSHGATIRKFDPTLPVPETQPWALSLLVPEGPLPEGLLSENPAAEDHASNLTHGPGQVLCGNPTKGLRERRNQYQEWAPLEQLPPHRPDLAIRPSTLRPDPAESCDLSMTGLRAWREPGLRPLLQRQLEFQQERLTHVQAQDPQKAPIEQEDQTGPKTSLTPLRLASELSRTSGFHLIPSPPKYPMPPESGISSLGRSADLPFRGRRLRVLGSLGPSLGEGSVLGERLALRALEVSSDPSHRAQGCPDPKPSLGPATCPLGLHCLHHLNPIPPAHPFP.

5 LRR repeats span residues 94–115 (NLIQ…GTSL), 117–138 (QLQV…GSFL), 139–160 (ALKE…CLLE), 161–182 (QLEV…RYLQ), and 186–206 (RLTT…PGPS). The LRRCT domain maps to 207 to 249 (NKAPQDYNYRAEVKKLIPQLHILDEVPTTCTNLPAPQKLSQDW). The tract at residues 405–433 (LTHVQAQDPQKAPIEQEDQTGPKTSLTPL) is disordered.

The protein belongs to the LRRC56 family. As to quaternary structure, interacts with IFT88.

The protein localises to the cell projection. It is found in the cilium. Required for the assembly of dynein arms. This chain is Leucine-rich repeat-containing protein 56 (Lrrc56), found in Rattus norvegicus (Rat).